Reading from the N-terminus, the 223-residue chain is Germin-like protein 1-3 (223 aa).

Positions 1-22 (MAKLILATFAVVFMALAATSLA) are cleaved as a signal peptide. Residues cysteine 32 and cysteine 50 are joined by a disulfide bond. N-linked (GlcNAc...) asparagine glycosylation occurs at asparagine 55. In terms of domain architecture, Cupin type-1 spans 64–212 (DGLMKAGNTG…AFQVDGGMVE (149 aa)). Positions 112, 114, 119, and 158 each coordinate Mn(2+).

The protein belongs to the germin family. Oligomer (believed to be a pentamer but probably hexamer).

The protein localises to the secreted. Its subcellular location is the extracellular space. It localises to the apoplast. In terms of biological role, may play a role in plant defense. Probably has no oxalate oxidase activity even if the active site is conserved. The polypeptide is Germin-like protein 1-3 (GER8) (Oryza sativa subsp. japonica (Rice)).